A 301-amino-acid chain; its full sequence is Outer membrane porin G (301 aa).

The first 21 residues, 1 to 21, serve as a signal peptide directing secretion; it reads MKKLLPCTALVMCAGMACAQA. Beta stranded transmembrane passes span 27 to 35, 47 to 57, 64 to 72, 89 to 98, 104 to 112, 129 to 136, 149 to 158, 172 to 182, 186 to 195, 201 to 209, 213 to 222, 230 to 238, 240 to 248, 254 to 265, 269 to 279, and 289 to 300; these read WHFNIGAMY, MDGLAEPSVYF, WRIALAYYQ, RPELEVHYQF, FSFGLTGGF, NMQRWKIA, FNGWLSMYKF, VETETGLQYTF, VALRVNYYLE, DDSRNNGEF, EIRAYLPLTL, YTRIGLDRW, NWDWQDDIE, FNRVGLFYGYDF, LSVSLEYAFEW, and KFHYAGVGVNYS.

Monomer.

It is found in the cell outer membrane. Its function is as follows. Forms channels functionally larger than those of classical porins. In terms of biological role, may act as a regulator of the RCS-phosphorelay signal transduction pathway. In Escherichia coli (strain K12), this protein is Outer membrane porin G (ompG).